Reading from the N-terminus, the 164-residue chain is Crossover junction endodeoxyribonuclease RuvC (164 aa).

Active-site residues include Asp-7, Glu-67, and Asp-140. Positions 7, 67, and 140 each coordinate Mg(2+).

It belongs to the RuvC family. As to quaternary structure, homodimer which binds Holliday junction (HJ) DNA. The HJ becomes 2-fold symmetrical on binding to RuvC with unstacked arms; it has a different conformation from HJ DNA in complex with RuvA. In the full resolvosome a probable DNA-RuvA(4)-RuvB(12)-RuvC(2) complex forms which resolves the HJ. Mg(2+) is required as a cofactor.

The protein resides in the cytoplasm. It carries out the reaction Endonucleolytic cleavage at a junction such as a reciprocal single-stranded crossover between two homologous DNA duplexes (Holliday junction).. Its function is as follows. The RuvA-RuvB-RuvC complex processes Holliday junction (HJ) DNA during genetic recombination and DNA repair. Endonuclease that resolves HJ intermediates. Cleaves cruciform DNA by making single-stranded nicks across the HJ at symmetrical positions within the homologous arms, yielding a 5'-phosphate and a 3'-hydroxyl group; requires a central core of homology in the junction. The consensus cleavage sequence is 5'-(A/T)TT(C/G)-3'. Cleavage occurs on the 3'-side of the TT dinucleotide at the point of strand exchange. HJ branch migration catalyzed by RuvA-RuvB allows RuvC to scan DNA until it finds its consensus sequence, where it cleaves and resolves the cruciform DNA. The polypeptide is Crossover junction endodeoxyribonuclease RuvC (Alkaliphilus oremlandii (strain OhILAs) (Clostridium oremlandii (strain OhILAs))).